Reading from the N-terminus, the 448-residue chain is Tumor necrosis factor receptor superfamily member EDAR (448 aa).

The N-terminal stretch at 1 to 26 (MAHVGDCTQTPWLPVLVVSLMCSARA) is a signal peptide. At 27 to 187 (EYSNCGENEY…LSGQGHLATA (161 aa)) the chain is on the extracellular side. TNFR-Cys repeat units follow at residues 30–71 (NCGE…DYGC), 73–113 (PCPA…DAEC), and 115–148 (PCLPGYYMLENRPRNIYGMVCYSCLLAPPNTKEC). Disulfide bonds link cysteine 31–cysteine 44, cysteine 47–cysteine 60, cysteine 50–cysteine 71, cysteine 74–cysteine 87, cysteine 93–cysteine 113, and cysteine 135–cysteine 148. An N-linked (GlcNAc...) asparagine glycan is attached at asparagine 38. The chain crosses the membrane as a helical span at residues 188 to 208 (LIIAMSTIFIMAIAIVLIIMF). The Cytoplasmic portion of the chain corresponds to 209–448 (YILKTKPSAP…PPASQPHAAS (240 aa)). Residues 220–297 (CCTSHPGKSV…EEPAPDKQGS (78 aa)) form a disordered region. Residues 233-243 (VSKDEEKKEAP) are compositionally biased toward basic and acidic residues. Over residues 271–283 (DASSENEQLLSRS) the composition is skewed to polar residues. One can recognise a Death domain in the interval 358–431 (RMLSSTYNSE…DAVESLCADI (74 aa)).

As to quaternary structure, binds to EDARADD. Associates with TRAF1, TRAF2, TRAF3 and NIK. As to expression, detected in fetal kidney, lung, skin and cultured neonatal epidermal keratinocytes. Not detected in lymphoblast and fibroblast cell lines.

The protein localises to the membrane. Its function is as follows. Receptor for EDA isoform A1, but not for EDA isoform A2. Mediates the activation of NF-kappa-B and JNK. May promote caspase-independent cell death. This chain is Tumor necrosis factor receptor superfamily member EDAR (EDAR), found in Homo sapiens (Human).